The following is a 357-amino-acid chain: Glutamine synthetase root isozyme A (357 aa).

In terms of domain architecture, GS beta-grasp spans Ile19–Gly99. A GS catalytic domain is found at Lys106–Pro357.

Belongs to the glutamine synthetase family. Homooctamer.

The protein resides in the cytoplasm. It carries out the reaction L-glutamate + NH4(+) + ATP = L-glutamine + ADP + phosphate + H(+). This chain is Glutamine synthetase root isozyme A (GS3A), found in Pisum sativum (Garden pea).